The following is a 117-amino-acid chain: Probable non-functional immunoglobulinn kappa variable 1-37 (117 aa).

A signal peptide spans 1–22 (MDMRVPAQLLGLLLLWVPGARC). The 94-residue stretch at 24 to 117 (IQLTQSPSSL…YYGQRTYNAP (94 aa)) folds into the Ig-like domain.

Most probably, the immunoglobulin is not assembled due to incorrect folding of light chain. Immunoglobulins are composed of two identical heavy chains and two identical light chains; disulfide-linked.

Its subcellular location is the secreted. The protein localises to the cell membrane. Its function is as follows. Probable non-functional open reading frame (ORF) of V region of the variable domain of immunoglobulin light chains. Non-functional ORF generally cannot participate in the synthesis of a productive immunoglobulin chain due to altered V-(D)-J or switch recombination and/or splicing site (at mRNA level) and/or conserved amino acid change (protein level). Immunoglobulins, also known as antibodies, are membrane-bound or secreted glycoproteins produced by B lymphocytes. In the recognition phase of humoral immunity, the membrane-bound immunoglobulins serve as receptors which, upon binding of a specific antigen, trigger the clonal expansion and differentiation of B lymphocytes into immunoglobulins-secreting plasma cells. Secreted immunoglobulins mediate the effector phase of humoral immunity, which results in the elimination of bound antigens. The antigen binding site is formed by the variable domain of one heavy chain, together with that of its associated light chain. Thus, each immunoglobulin has two antigen binding sites with remarkable affinity for a particular antigen. The variable domains are assembled by a process called V-(D)-J rearrangement and can then be subjected to somatic hypermutations which, after exposure to antigen and selection, allow affinity maturation for a particular antigen. In Homo sapiens (Human), this protein is Probable non-functional immunoglobulinn kappa variable 1-37.